A 457-amino-acid polypeptide reads, in one-letter code: MSLMLDDQPPMEAQYAEEGPGPGIFRAEPGDQQHPISQAVCWRSMRRGCAVLGALGLLAGAGVGSWLLVLYLCPAASQPISGTLQDEEITLSCSEASAEEALLPALPKTVSFRINSEDFLLEAQVRDQPRWLLVCHEGWSPALGLQICWSLGHLRLTHHKGVNLTDIKLNSSQEFAQLSPRLGGFLEEAWQPRNNCTSGQVVSLRCSECGARPLASRIVGGQSVAPGRWPWQASVALGFRHTCGGSVLAPRWVVTAAHCMHSFRLARLSSWRVHAGLVSHSAVRPHQGALVERIIPHPLYSAQNHDYDVALLRLQTALNFSDTVGAVCLPAKEQHFPKGSRCWVSGWGHTHPSHTYSSDMLQDTVVPLFSTQLCNSSCVYSGALTPRMLCAGYLDGRADACQGDSGGPLVCPDGDTWRLVGVVSWGRGCAEPNHPGVYAKVAEFLDWIHDTAQDSLL.

The disordered stretch occupies residues 1–21 (MSLMLDDQPPMEAQYAEEGPG). Topologically, residues 1–49 (MSLMLDDQPPMEAQYAEEGPGPGIFRAEPGDQQHPISQAVCWRSMRRGC) are cytoplasmic. The helical; Signal-anchor for type II membrane protein transmembrane segment at 50-70 (AVLGALGLLAGAGVGSWLLVL) threads the bilayer. Residues 71-457 (YLCPAASQPI…IHDTAQDSLL (387 aa)) are Extracellular-facing. The SRCR domain occupies 112–207 (FRINSEDFLL…SGQVVSLRCS (96 aa)). 7 cysteine pairs are disulfide-bonded: C135–C196, C148–C206, C209–C328, C243–C259, C342–C411, C374–C390, and C401–C429. Residues N163, N170, and N195 are each glycosylated (N-linked (GlcNAc...) asparagine). The region spanning 218 to 453 (IVGGQSVAPG…FLDWIHDTAQ (236 aa)) is the Peptidase S1 domain. Active-site charge relay system residues include H258 and D308. 2 N-linked (GlcNAc...) asparagine glycosylation sites follow: N319 and N375. Catalysis depends on S405, which acts as the Charge relay system.

The protein belongs to the peptidase S1 family. In terms of tissue distribution, brain-specific. Predominantly expressed in neurons, in their axons, and at the synapses of motoneurons in the spinal cord.

The protein resides in the cell membrane. Its function is as follows. May play a role in hearing. This is Transmembrane protease serine 5 (TMPRSS5) from Homo sapiens (Human).